We begin with the raw amino-acid sequence, 210 residues long: Urease accessory protein UreE (210 aa).

The disordered stretch occupies residues 136-210 (PEGGAYAEPS…HGHSHAHDHK (75 aa)). Composition is skewed to basic and acidic residues over residues 145–169 (SHAH…TSHD) and 178–196 (HDHD…EHCG). Residues 197–210 (HDHHHGHSHAHDHK) are compositionally biased toward basic residues.

It belongs to the UreE family.

Its subcellular location is the cytoplasm. In terms of biological role, involved in urease metallocenter assembly. Binds nickel. Probably functions as a nickel donor during metallocenter assembly. The chain is Urease accessory protein UreE from Bradyrhizobium sp. (strain ORS 278).